We begin with the raw amino-acid sequence, 870 residues long: Dynamin-2 (870 aa).

Residues 28–294 form the Dynamin-type G domain; the sequence is HLDLPQIAVV…LTNHIRESLP (267 aa). Positions 38 to 45 are G1 motif; sequence GGQSAGKS. Ser-41, Gly-43, Lys-44, Ser-45, Ser-46, Arg-59, and Gly-60 together coordinate GDP. A G2 motif region spans residues 64–66; the sequence is VTR. The interval 136-139 is G3 motif; it reads DLPG. The interval 205-208 is G4 motif; the sequence is TKLD. Residues Lys-206, Asp-208, and Asp-211 each contribute to the GDP site. A Phosphotyrosine modification is found at Tyr-231. Residues 235–238 are G5 motif; sequence VNRS. GDP contacts are provided by Asn-236, Arg-237, and Gln-239. The residue at position 299 (Lys-299) is an N6-acetyllysine. The PH domain maps to 519 to 625; sequence LVIRRGWLTI…WKASFLRAGV (107 aa). A Phosphotyrosine modification is found at Tyr-597. Lys-598 bears the N6-acetyllysine mark. Residues 653–744 enclose the GED domain; the sequence is VETIRNLVDS…IIGDISTSTV (92 aa). The disordered stretch occupies residues 741–870; the sequence is TSTVSTPVPP…IRPAEPSLLD (130 aa). At Thr-755 the chain carries Phosphothreonine. Residues 756-767 are compositionally biased toward polar residues; the sequence is WLQNTSGHSPTP. Phosphoserine; by CDK1 is present on Ser-764. Residues 826–846 show a composition bias toward pro residues; it reads SAPPQIPSRPARIPPGIPPGV. Low complexity predominate over residues 847 to 864; the sequence is PSRRAPAAPSRPTIIRPA.

This sequence belongs to the TRAFAC class dynamin-like GTPase superfamily. Dynamin/Fzo/YdjA family. As to quaternary structure, oligomerizes into a helical polymer that self-assembles around the vesicle membrane, when associated to the menbrane through lipid binding. Interacts with SHANK1 and SHANK2. Interacts with SNX9. Interacts (via C-terminal proline-rich domain (PRD)) with SNX18 (via SH3 domain); this interaction regulates ATG9A and ATG16L1 trafficking from recycling endosomes to sites of autophagosome formation. Interacts with SNX33 (via SH3 domain). Interacts with MYO1E (via SH3 domain). Interacts with PSTPIP1 (via SH3 domain). Interacts with CTNND2. Interacts (via C-terminal proline-rich domain (PRD)) with BIN1 (via SH3 domain); this interaction allows the recruitment of DNM2 to the membrane tubules and inhibits self-assembly-stimulated GTPase activity on the membrane. Interacts with GABARAP, GABARAPL1 and GABARAPL2. Interacts with MAP1LC3B (the lipidate and non-lipidated LC3 form); this interaction mediates recycling endosome scission leading to autophagosome release. Interacts with ITSN1. Interacts (via C-terminal proline-rich domain (PRD)) with SH3BP4 (via SH3 domain); this interaction controls the GTPase activity and is prevented by EGFR-induced tyrosine phosphorylation of either DNM2 or SH3BP4. Interacts with MYOF. May interact with PIK3C3. May be a component of a complex composed of RAB5A (in GDP-bound form), DYN2 and PIK3C3. Interacts with SDC4; this interaction is markedly enhanced at focal ahesion site upon induction of focal adhesions and stress-fiber formation. Interacts with ACTN1. Interacts with CTTN; this interaction stimulates the intrinsic GTPase activity of DNM2 and stabilizes the association of DNM2 and actin filaments; in addition this interaction is stimulated by ligand binding to the receptor, leading to the recruitment of the DNM2-CTTN complex to the sequestered receptor-ligand complex to its internalization. Interacts with NOSTRIN (via SH3 domain); this interaction allows the recruitment of NOS3 to dynamin-positive structures. Interacts with TUBG1; this interaction may participate in centrosome cohesion. In terms of processing, phosphorylation at Ser-848 by GSK3-alpha relieves the inhibition of BIN1 and promotes endocytosis. Phosphorylation at Ser-764 by CDK1 is greatly increased upon mitotic entry. It regulates cytokinesis downstream of calcineurin, and does not affect clathrin-mediated endocytosis. Dephosphorylated by calcineurin/PP2 during cytokinesis in a Ca(2+)- and calmodulin-dependent manner. Phosphorylated on tyrosine residues by EGFR. Phosphorylated on tyrosine residues after activation of SRC. In terms of tissue distribution, expressed in most tissues during embryonic development, including the peripheral nervous system although no expression is evident in skeletal muscle or heart.

It is found in the cytoplasm. It localises to the cytoskeleton. Its subcellular location is the cytoplasmic vesicle. The protein resides in the clathrin-coated vesicle. The protein localises to the cell projection. It is found in the uropodium. It localises to the endosome. Its subcellular location is the microtubule organizing center. The protein resides in the centrosome. The protein localises to the centriole. It is found in the recycling endosome. It localises to the phagocytic cup. Its subcellular location is the phagosome membrane. The protein resides in the podosome. The protein localises to the cell junction. It is found in the postsynaptic density. It localises to the synapse. Its subcellular location is the synaptosome. The protein resides in the midbody. The protein localises to the membrane. It is found in the clathrin-coated pit. The catalysed reaction is GTP + H2O = GDP + phosphate + H(+). Functionally, catalyzes the hydrolysis of GTP and utilizes this energy to mediate vesicle scission at plasma membrane during endocytosis and filament remodeling at many actin structures during organization of the actin cytoskeleton. Plays an important role in vesicular trafficking processes, namely clathrin-mediated endocytosis (CME), exocytic and clathrin-coated vesicle from the trans-Golgi network, and PDGF stimulated macropinocytosis. During vesicular trafficking process, associates to the membrane, through lipid binding, and self-assembles into ring-like structure through oligomerization to form a helical polymer around the vesicle membrane and leading to vesicle scission. Plays a role in organization of the actin cytoskeleton by mediating arrangement of stress fibers and actin bundles in podocytes. During organization of the actin cytoskeleton, self-assembles into ring-like structure that directly bundles actin filaments to form typical membrane tubules decorated with dynamin spiral polymers. Self-assembly increases GTPase activity and the GTP hydrolysis causes the rapid depolymerization of dynamin spiral polymers, and results in dispersion of actin bundles. Remodels, through its interaction with CTTN, bundled actin filaments in a GTPase-dependent manner and plays a role in orchestrating the global actomyosin cytoskeleton. The interaction with CTTN stabilizes the interaction of DNM2 and actin filaments and stimulates the intrinsic GTPase activity that results in actin filament-barbed ends and increases the sensitivity of filaments in bundles to the actin depolymerizing factor, CFL1. Plays a role in the autophagy process, by participating in the formation of ATG9A vesicles destined for the autophagosomes through its interaction with SNX18, by mediating recycling endosome scission leading to autophagosome release through MAP1LC3B interaction. Also regulates maturation of apoptotic cell corpse-containing phagosomes by recruiting PIK3C3 to the phagosome membrane. Also plays a role in cytokinesis. May participate in centrosome cohesion through its interaction with TUBG1. Plays a role in the regulation of neuron morphology, axon growth and formation of neuronal growth cones. Involved in membrane tubulation. In Mus musculus (Mouse), this protein is Dynamin-2.